We begin with the raw amino-acid sequence, 116 residues long: Transcription elongation factor SPT4 homolog 1 (116 aa).

The segment at Cys-19–Cys-39 adopts a C4-type zinc-finger fold.

The protein belongs to the SPT4 family.

It is found in the nucleus. Its function is as follows. May regulate transcription elongation by RNA polymerase II. May enhance transcriptional pausing at sites proximal to the promoter, which may in turn facilitate the assembly of an elongation competent RNA polymerase II complex. The polypeptide is Transcription elongation factor SPT4 homolog 1 (Arabidopsis thaliana (Mouse-ear cress)).